We begin with the raw amino-acid sequence, 215 residues long: Ras-related protein Rab-14 (215 aa).

At A2 the chain carries N-acetylalanine. The GTP site is built by G21, V22, G23, K24, S25, C26, A38, D39, C40, H42, and T43. A Mg(2+)-binding site is contributed by S25. A Switch 1 motif is present at residues 42-47 (HTIGVE). Positions 43 and 66 each coordinate Mg(2+). The short motif at 68–77 (AGQERFRAVT) is the Switch 2 element. Residues G69, N124, K125, D127, A155, and K156 each contribute to the GTP site. Positions 188 to 215 (SGVQHKPSAPQGGRLTSEPQPQREGCGC) are disordered. Residues C213 and C215 are each lipidated (S-geranylgeranyl cysteine). Cysteine methyl ester is present on C215.

The protein belongs to the small GTPase superfamily. Rab family. The cofactor is Mg(2+).

The protein resides in the recycling endosome. It is found in the early endosome membrane. The protein localises to the golgi apparatus membrane. Its subcellular location is the golgi apparatus. It localises to the trans-Golgi network membrane. The protein resides in the cytoplasmic vesicle. It is found in the phagosome. The enzyme catalyses GTP + H2O = GDP + phosphate + H(+). Its activity is regulated as follows. Regulated by guanine nucleotide exchange factors (GEFs) including DENND6A and DENND6B which promote the exchange of bound GDP for free GTP. Regulated by GTPase activating proteins (GAPs) which increase the GTP hydrolysis activity. Inhibited by GDP dissociation inhibitors (GDIs) which prevent Rab-GDP dissociation. Functionally, the small GTPases Rab are key regulators of intracellular membrane trafficking, from the formation of transport vesicles to their fusion with membranes. Rabs cycle between an inactive GDP-bound form and an active GTP-bound form that is able to recruit to membranes different set of downstream effectors directly responsible for vesicle formation, movement, tethering and fusion. Involved in membrane trafficking between the Golgi complex and endosomes during early embryonic development. Regulates the Golgi to endosome transport of FGFR-containing vesicles during early development, a key process for developing basement membrane and epiblast and primitive endoderm lineages during early postimplantation development. May act by modulating the kinesin KIF16B-cargo association to endosomes. Regulates, together with its guanine nucleotide exchange factor DENND6A, the specific endocytic transport of ADAM10, N-cadherin/CDH2 shedding and cell-cell adhesion. Mediates endosomal tethering and fusion through the interaction with RUFY1 and RAB4B. Interaction with RAB11FIP1 may function in the process of neurite formation. The chain is Ras-related protein Rab-14 (RAB14) from Gallus gallus (Chicken).